A 454-amino-acid chain; its full sequence is LETM1 domain-containing protein YLH47, mitochondrial (454 aa).

Residues M1–W45 constitute a mitochondrion transit peptide. Residues N46–R136 lie on the Mitochondrial intermembrane side of the membrane. Residues E51–V73 are disordered. A helical transmembrane segment spans residues L137–L157. Over K158 to K454 the chain is Mitochondrial matrix. The region spanning K177–D371 is the Letm1 RBD domain. Residues E376 to L423 adopt a coiled-coil conformation. 2 stretches are compositionally biased toward basic and acidic residues: residues E420–I430 and V437–K454. Positions E420–K454 are disordered.

Associates with the mitochondrial ribosomes.

It is found in the mitochondrion inner membrane. Its function is as follows. Involved in mitochondrial potassium homeostasis through the mitochondrial K(+)/H(+) exchange regulation. This chain is LETM1 domain-containing protein YLH47, mitochondrial (YLH47), found in Saccharomyces cerevisiae (strain ATCC 204508 / S288c) (Baker's yeast).